The chain runs to 301 residues: ATP synthase F(0) complex subunit B1, mitochondrial (301 aa).

Residues 1 to 21 (MSLSRLSSPQTFSRVFIVARG) constitute a mitochondrion transit peptide.

This sequence belongs to the eukaryotic ATPase B chain family. Subunit of the F-type ATPase which has 2 components, CF(1) - the catalytic core - and CF(0) - the membrane proton channel.

The protein localises to the mitochondrion. It localises to the mitochondrion inner membrane. Functionally, mitochondrial membrane ATP synthase (F(1)F(0) ATP synthase or Complex V) produces ATP from ADP in the presence of a proton gradient across the membrane which is generated by electron transport complexes of the respiratory chain. F-type ATPases consist of two structural domains, F(1) - containing the extramembraneous catalytic core, and F(0) - containing the membrane proton channel, linked together by a central stalk and a peripheral stalk. During catalysis, ATP synthesis in the catalytic domain of F(1) is coupled via a rotary mechanism of the central stalk subunits to proton translocation. Part of the complex F(0) domain and the peripheric stalk, which acts as a stator to hold the subunits of the catalytic subcomplexes relative to the rotary elements. Plays a role in germline development. This chain is ATP synthase F(0) complex subunit B1, mitochondrial, found in Caenorhabditis elegans.